Here is a 281-residue protein sequence, read N- to C-terminus: 2-dehydro-3-deoxyphosphooctonate aldolase (281 aa).

Belongs to the KdsA family.

The protein localises to the cytoplasm. It carries out the reaction D-arabinose 5-phosphate + phosphoenolpyruvate + H2O = 3-deoxy-alpha-D-manno-2-octulosonate-8-phosphate + phosphate. It functions in the pathway carbohydrate biosynthesis; 3-deoxy-D-manno-octulosonate biosynthesis; 3-deoxy-D-manno-octulosonate from D-ribulose 5-phosphate: step 2/3. The protein operates within bacterial outer membrane biogenesis; lipopolysaccharide biosynthesis. This Stutzerimonas stutzeri (strain A1501) (Pseudomonas stutzeri) protein is 2-dehydro-3-deoxyphosphooctonate aldolase.